We begin with the raw amino-acid sequence, 83 residues long: Exodeoxyribonuclease 7 small subunit (83 aa).

It belongs to the XseB family. As to quaternary structure, heterooligomer composed of large and small subunits.

Its subcellular location is the cytoplasm. The enzyme catalyses Exonucleolytic cleavage in either 5'- to 3'- or 3'- to 5'-direction to yield nucleoside 5'-phosphates.. Functionally, bidirectionally degrades single-stranded DNA into large acid-insoluble oligonucleotides, which are then degraded further into small acid-soluble oligonucleotides. The sequence is that of Exodeoxyribonuclease 7 small subunit from Mesorhizobium japonicum (strain LMG 29417 / CECT 9101 / MAFF 303099) (Mesorhizobium loti (strain MAFF 303099)).